Reading from the N-terminus, the 195-residue chain is Imidazoleglycerol-phosphate dehydratase (195 aa).

Belongs to the imidazoleglycerol-phosphate dehydratase family.

The protein localises to the cytoplasm. It carries out the reaction D-erythro-1-(imidazol-4-yl)glycerol 3-phosphate = 3-(imidazol-4-yl)-2-oxopropyl phosphate + H2O. It functions in the pathway amino-acid biosynthesis; L-histidine biosynthesis; L-histidine from 5-phospho-alpha-D-ribose 1-diphosphate: step 6/9. The sequence is that of Imidazoleglycerol-phosphate dehydratase from Trichlorobacter lovleyi (strain ATCC BAA-1151 / DSM 17278 / SZ) (Geobacter lovleyi).